We begin with the raw amino-acid sequence, 253 residues long: Zinc import ATP-binding protein ZnuC (253 aa).

One can recognise an ABC transporter domain in the interval 6-227; the sequence is VTLNKISVTF…FGNRGAEQLA (222 aa). 38 to 45 lines the ATP pocket; the sequence is GPNGAGKS.

It belongs to the ABC transporter superfamily. Zinc importer (TC 3.A.1.15.5) family. In terms of assembly, the complex is composed of two ATP-binding proteins (ZnuC), two transmembrane proteins (ZnuB) and a solute-binding protein (ZnuA).

It is found in the cell inner membrane. The enzyme catalyses Zn(2+)(out) + ATP(in) + H2O(in) = Zn(2+)(in) + ADP(in) + phosphate(in) + H(+)(in). Functionally, part of the ABC transporter complex ZnuABC involved in zinc import. Responsible for energy coupling to the transport system. In Yersinia pseudotuberculosis serotype I (strain IP32953), this protein is Zinc import ATP-binding protein ZnuC.